A 120-amino-acid chain; its full sequence is Spermidine export protein MdtJ (120 aa).

A run of 4 helical transmembrane segments spans residues 1–21 (MFYW…TLSM), 31–51 (AGFI…SFAV), 54–74 (IALG…ITIF), and 81–101 (EALS…IVLI).

This sequence belongs to the drug/metabolite transporter (DMT) superfamily. Small multidrug resistance (SMR) (TC 2.A.7.1) family. MdtJ subfamily. Forms a complex with MdtI.

The protein resides in the cell inner membrane. Its function is as follows. Catalyzes the excretion of spermidine. This chain is Spermidine export protein MdtJ, found in Salmonella agona (strain SL483).